The sequence spans 114 residues: T cell receptor alpha variable 3 (114 aa).

A signal peptide spans 1–20; the sequence is MASAPISMLAMLFTLSGLRA. One can recognise an Ig-like domain in the interval 21–114; the sequence is QSVAQPEDQV…SALYFCAVRD (94 aa). A disulfide bridge connects residues Cys-42 and Cys-110. Asn-87 is a glycosylation site (N-linked (GlcNAc...) asparagine).

In terms of assembly, alpha-beta TR is a heterodimer composed of an alpha and beta chain; disulfide-linked. The alpha-beta TR is associated with the transmembrane signaling CD3 coreceptor proteins to form the TR-CD3 (TcR or TCR). The assembly of alpha-beta TR heterodimers with CD3 occurs in the endoplasmic reticulum where a single alpha-beta TR heterodimer associates with one CD3D-CD3E heterodimer, one CD3G-CD3E heterodimer and one CD247 homodimer forming a stable octameric structure. CD3D-CD3E and CD3G-CD3E heterodimers preferentially associate with TR alpha and TR beta chains, respectively. The association of the CD247 homodimer is the last step of TcR assembly in the endoplasmic reticulum and is required for transport to the cell surface.

The protein resides in the cell membrane. Functionally, v region of the variable domain of T cell receptor (TR) alpha chain that participates in the antigen recognition. Alpha-beta T cell receptors are antigen specific receptors which are essential to the immune response and are present on the cell surface of T lymphocytes. Recognize peptide-major histocompatibility (MH) (pMH) complexes that are displayed by antigen presenting cells (APC), a prerequisite for efficient T cell adaptive immunity against pathogens. Binding of alpha-beta TR to pMH complex initiates TR-CD3 clustering on the cell surface and intracellular activation of LCK that phosphorylates the ITAM motifs of CD3G, CD3D, CD3E and CD247 enabling the recruitment of ZAP70. In turn ZAP70 phosphorylates LAT, which recruits numerous signaling molecules to form the LAT signalosome. The LAT signalosome propagates signal branching to three major signaling pathways, the calcium, the mitogen-activated protein kinase (MAPK) kinase and the nuclear factor NF-kappa-B (NF-kB) pathways, leading to the mobilization of transcription factors that are critical for gene expression and essential for T cell growth and differentiation. The T cell repertoire is generated in the thymus, by V-(D)-J rearrangement. This repertoire is then shaped by intrathymic selection events to generate a peripheral T cell pool of self-MH restricted, non-autoaggressive T cells. Post-thymic interaction of alpha-beta TR with the pMH complexes shapes TR structural and functional avidity. The polypeptide is T cell receptor alpha variable 3 (Homo sapiens (Human)).